Consider the following 235-residue polypeptide: Secretory carrier-associated membrane protein 5 (235 aa).

At 1–39 (MAEKVNNFPPLPKFIPLKPCFYQDFEADIPPQHLSLTKR) the chain is on the cytoplasmic side. The helical transmembrane segment at 40-60 (LYYLWMLNSVTLAVNLVGCLA) threads the bilayer. At 61–67 (WLIGGGG) the chain is on the extracellular side. A helical transmembrane segment spans residues 68 to 88 (ATNFGLAFLWLILFTPCSYVC). Residues 89–102 (WFRPIYKAFKTDSS) lie on the Cytoplasmic side of the membrane. The helical transmembrane segment at 103 to 125 (FSFMAFFFTFMAQLVISIIQAVG) threads the bilayer. The Extracellular portion of the chain corresponds to 126-148 (IPGWGVCGWIATISFFGTNIGSA). The chain crosses the membrane as a helical span at residues 149–169 (VVMLIPTVMFTVVAVFSFIAL). At 170–235 (SMVHKFYRGS…TPNYTYSNEM (66 aa)) the chain is on the cytoplasmic side.

The protein belongs to the SCAMP family. SCAMP5 subfamily. In terms of assembly, interacts (via C-terminal part) with SYT1 and SYT2; interaction with synaptotagmins making a link with the SNARE molecules. Interacts with SLC9A7.

It localises to the cell membrane. The protein localises to the golgi apparatus membrane. The protein resides in the golgi apparatus. Its subcellular location is the trans-Golgi network membrane. It is found in the recycling endosome membrane. It localises to the cytoplasmic vesicle. The protein localises to the secretory vesicle. The protein resides in the synaptic vesicle membrane. In terms of biological role, required for the calcium-dependent exocytosis of signal sequence-containing cytokines such as CCL5. Probably acts in cooperation with the SNARE machinery. In Rattus norvegicus (Rat), this protein is Secretory carrier-associated membrane protein 5 (Scamp5).